Consider the following 309-residue polypeptide: Dihydroorotate dehydrogenase B (NAD(+)), catalytic subunit (309 aa).

Residues serine 21 and 45 to 46 (KA) each bind FMN. Substrate-binding positions include lysine 45 and 69–73 (NAIGL). Residues asparagine 99 and asparagine 127 each coordinate FMN. Residue asparagine 127 participates in substrate binding. Catalysis depends on cysteine 130, which acts as the Nucleophile. The FMN site is built by lysine 165 and isoleucine 191. 192-193 (NT) contacts substrate. FMN-binding positions include glycine 217, 243-244 (GG), and 265-266 (GT).

Belongs to the dihydroorotate dehydrogenase family. Type 1 subfamily. As to quaternary structure, heterotetramer of 2 PyrK and 2 PyrD type B subunits. It depends on FMN as a cofactor.

Its subcellular location is the cytoplasm. The catalysed reaction is (S)-dihydroorotate + NAD(+) = orotate + NADH + H(+). It functions in the pathway pyrimidine metabolism; UMP biosynthesis via de novo pathway; orotate from (S)-dihydroorotate (NAD(+) route): step 1/1. Catalyzes the conversion of dihydroorotate to orotate with NAD(+) as electron acceptor. The polypeptide is Dihydroorotate dehydrogenase B (NAD(+)), catalytic subunit (pyrD) (Exiguobacterium sibiricum (strain DSM 17290 / CCUG 55495 / CIP 109462 / JCM 13490 / 255-15)).